We begin with the raw amino-acid sequence, 60 residues long: Large ribosomal subunit protein uL30 (60 aa).

It belongs to the universal ribosomal protein uL30 family. As to quaternary structure, part of the 50S ribosomal subunit.

This Leptothrix cholodnii (strain ATCC 51168 / LMG 8142 / SP-6) (Leptothrix discophora (strain SP-6)) protein is Large ribosomal subunit protein uL30.